The sequence spans 393 residues: Acetyl-CoA acetyltransferase (393 aa).

C90 functions as the Acyl-thioester intermediate in the catalytic mechanism. Catalysis depends on proton acceptor residues H349 and C379.

The protein belongs to the thiolase-like superfamily. Thiolase family. Homotetramer.

The protein resides in the cytoplasm. The catalysed reaction is 2 acetyl-CoA = acetoacetyl-CoA + CoA. Its pathway is biopolymer metabolism; poly-(R)-3-hydroxybutanoate biosynthesis. It participates in metabolic intermediate biosynthesis; (R)-mevalonate biosynthesis; (R)-mevalonate from acetyl-CoA: step 1/3. The polypeptide is Acetyl-CoA acetyltransferase (Rhizobium meliloti (strain 1021) (Ensifer meliloti)).